Reading from the N-terminus, the 140-residue chain is MIRQEKDIKDEIMYGEREIEAGSLICFPNPNINRDYEISIDFPEFTCKCPFSGYPDFATLKIKYQPNTKVIELKAIKLYLNSFREKKISHEEVTNKIIDDFVEVSDPKWMQLEADFNPRGNVHTIIRVCHGKRNNLELSL.

Cys49 serves as the catalytic Thioimide intermediate. Catalysis depends on Asp56, which acts as the Proton donor. Substrate-binding positions include 71 to 73 and 90 to 91; these read IEL and HE.

It belongs to the GTP cyclohydrolase I family. QueF type 1 subfamily.

Its subcellular location is the cytoplasm. The catalysed reaction is 7-aminomethyl-7-carbaguanine + 2 NADP(+) = 7-cyano-7-deazaguanine + 2 NADPH + 3 H(+). It participates in tRNA modification; tRNA-queuosine biosynthesis. In terms of biological role, catalyzes the NADPH-dependent reduction of 7-cyano-7-deazaguanine (preQ0) to 7-aminomethyl-7-deazaguanine (preQ1). In Prochlorococcus marinus (strain NATL2A), this protein is NADPH-dependent 7-cyano-7-deazaguanine reductase.